Consider the following 447-residue polypeptide: GTPase Der (447 aa).

EngA-type G domains are found at residues Pro-3 to Arg-167 and Thr-181 to Met-354. GTP is bound by residues Gly-9 to Ser-16, Asp-56 to Phe-60, Asn-119 to Glu-122, Gly-187 to Ser-194, Asp-234 to Leu-238, and Asn-299 to Asp-302. The region spanning Val-355–Lys-439 is the KH-like domain.

The protein belongs to the TRAFAC class TrmE-Era-EngA-EngB-Septin-like GTPase superfamily. EngA (Der) GTPase family. Associates with the 50S ribosomal subunit.

Functionally, GTPase that plays an essential role in the late steps of ribosome biogenesis. The sequence is that of GTPase Der from Ralstonia pickettii (strain 12J).